The chain runs to 145 residues: Nucleoside diphosphate kinase (145 aa).

6 residues coordinate ATP: Lys-11, Phe-59, Arg-87, Thr-93, Arg-104, and Asn-114. Catalysis depends on His-117, which acts as the Pros-phosphohistidine intermediate.

Belongs to the NDK family. Requires Mg(2+) as cofactor.

It localises to the cytoplasm. The enzyme catalyses a 2'-deoxyribonucleoside 5'-diphosphate + ATP = a 2'-deoxyribonucleoside 5'-triphosphate + ADP. It catalyses the reaction a ribonucleoside 5'-diphosphate + ATP = a ribonucleoside 5'-triphosphate + ADP. Its function is as follows. Major role in the synthesis of nucleoside triphosphates other than ATP. The ATP gamma phosphate is transferred to the NDP beta phosphate via a ping-pong mechanism, using a phosphorylated active-site intermediate. This is Nucleoside diphosphate kinase from Sulfolobus acidocaldarius (strain ATCC 33909 / DSM 639 / JCM 8929 / NBRC 15157 / NCIMB 11770).